The primary structure comprises 207 residues: Protein-L-isoaspartate O-methyltransferase (207 aa).

S56 is an active-site residue.

Belongs to the methyltransferase superfamily. L-isoaspartyl/D-aspartyl protein methyltransferase family.

The protein resides in the cytoplasm. The enzyme catalyses [protein]-L-isoaspartate + S-adenosyl-L-methionine = [protein]-L-isoaspartate alpha-methyl ester + S-adenosyl-L-homocysteine. Functionally, catalyzes the methyl esterification of L-isoaspartyl residues in peptides and proteins that result from spontaneous decomposition of normal L-aspartyl and L-asparaginyl residues. It plays a role in the repair and/or degradation of damaged proteins. This Pyrobaculum islandicum (strain DSM 4184 / JCM 9189 / GEO3) protein is Protein-L-isoaspartate O-methyltransferase.